The following is a 179-amino-acid chain: Inner membrane-spanning protein YciB (179 aa).

Transmembrane regions (helical) follow at residues 22–42 (IYAA…YSWV), 50–70 (MALI…FFHN), 76–96 (WKVT…QWVM), 121–141 (LAWA…AFWL), and 149–169 (FKVF…GVYI).

Belongs to the YciB family.

Its subcellular location is the cell inner membrane. In terms of biological role, plays a role in cell envelope biogenesis, maintenance of cell envelope integrity and membrane homeostasis. This chain is Inner membrane-spanning protein YciB, found in Citrobacter koseri (strain ATCC BAA-895 / CDC 4225-83 / SGSC4696).